The primary structure comprises 115 residues: Large ribosomal subunit protein bL20 (115 aa).

This sequence belongs to the bacterial ribosomal protein bL20 family.

Binds directly to 23S ribosomal RNA and is necessary for the in vitro assembly process of the 50S ribosomal subunit. It is not involved in the protein synthesizing functions of that subunit. The protein is Large ribosomal subunit protein bL20 of Mycoplasmoides gallisepticum (strain R(low / passage 15 / clone 2)) (Mycoplasma gallisepticum).